A 168-amino-acid chain; its full sequence is G/U mismatch-specific DNA glycosylase (168 aa).

It belongs to the uracil-DNA glycosylase (UDG) superfamily. TDG/mug family. In terms of assembly, binds DNA as a monomer.

Its subcellular location is the cytoplasm. The catalysed reaction is Specifically hydrolyzes mismatched double-stranded DNA and polynucleotides, releasing free uracil.. Its function is as follows. Excises ethenocytosine and uracil, which can arise by alkylation or deamination of cytosine, respectively, from the corresponding mispairs with guanine in ds-DNA. It is capable of hydrolyzing the carbon-nitrogen bond between the sugar-phosphate backbone of the DNA and the mispaired base. The complementary strand guanine functions in substrate recognition. Required for DNA damage lesion repair in stationary-phase cells. The protein is G/U mismatch-specific DNA glycosylase of Salmonella paratyphi B (strain ATCC BAA-1250 / SPB7).